The primary structure comprises 162 residues: Nucleotide-binding protein Mpe_A3039 (162 aa).

The protein belongs to the YajQ family.

Nucleotide-binding protein. The polypeptide is Nucleotide-binding protein Mpe_A3039 (Methylibium petroleiphilum (strain ATCC BAA-1232 / LMG 22953 / PM1)).